The chain runs to 442 residues: MAAGTLYTYPENWRAFKAQIAAQYSGARLKIASASPAFTFGQTNRSPAFLSNFPLGKVPAYQGDDGFCLFESNAIAHFLSNDALRGSTPQASAQVLQWVSFADSEIIPPASAWVFPTLGIMQFNKQATEQAKEEVKRVLAVLNQHLNTRTFLVGERVSLADITVVCSLLWLYKQVLEPAFRQPYPNVTRWFLTCVNQPQFKAVLGEVKLCEKMAQFDAKKFAEMQPKKEAPAKKEKAGKEGGKQQQPQQEKKEKKKEEKKAAPAEEEMDECEAALASEPKAKDPYAHLPKSSFVMDEFKRKYSNEDTLTVALPYFWDHFDREGFSIWYAEYRFPEELTMSFMSCNLITGMFQRLDKLRKNAFASVILFGANNDSCISGIWVFRGQELAFTLSEDWQIDYESYTWRKLDVDSEECKTMVKEYFAWEGEFKHVGKSFNQGKIFK.

The region spanning 2–87 (AAGTLYTYPE…FLSNDALRGS (86 aa)) is the GST N-terminal domain. Positions 88 to 216 (TPQASAQVLQ…VKLCEKMAQF (129 aa)) constitute a GST C-terminal domain. Composition is skewed to basic and acidic residues over residues 224–242 (MQPKKEAPAKKEKAGKEGG) and 249–263 (QEKKEKKKEEKKAAP). The disordered stretch occupies residues 224 to 273 (MQPKKEAPAKKEKAGKEGGKQQQPQQEKKEKKKEEKKAAPAEEEMDECEA). The EF-1-gamma C-terminal domain maps to 281–442 (AKDPYAHLPK…KSFNQGKIFK (162 aa)).

In terms of assembly, EF-1 is composed of four subunits: alpha, beta, delta, and gamma.

Its function is as follows. Probably plays a role in anchoring the complex to other cellular components. The polypeptide is Elongation factor 1-gamma (eef1g) (Carassius auratus (Goldfish)).